The chain runs to 874 residues: GRB2-associated and regulator of MAPK protein 2 (874 aa).

A CABIT region spans residues 12 to 339 (RWSMGAFPLD…LLAGDPRVER (328 aa)). The segment covering 188–206 (GGGGPASAGAAGGTGGGGA) has biased composition (gly residues). Disordered regions lie at residues 188–207 (GGGGPASAGAAGGTGGGGAR), 388–422 (PGLARAPGPLAPAPAGEGDQEYVSPDWAAAPEPAA), 437–545 (GPEG…SPSP), 563–598 (GESSSRPAPGPLPSTTQPSQASRALTEPLSGRAASL), and 625–742 (APFG…PSKA). Low complexity-rich tracts occupy residues 388-403 (PGLARAPGPLAPAPAG) and 518-545 (SPSSSLSYYSSGLQDGAGSRSGSGSPSP). A compositionally biased stretch (polar residues) spans 575–585 (PSTTQPSQASR). Low complexity-rich tracts occupy residues 632-650 (PFSGPAYPSGPSAALSSGP) and 658-691 (ATSGPAYSPGPASPGQAYSAAPPSSCAPSSSSSS). S735 bears the Phosphoserine mark. One can recognise an SAM domain in the interval 807 to 871 (SALSLEEVSR…KIMQFIKGWR (65 aa)).

It belongs to the GAREM family.

In terms of biological role, probable adapter protein that may provide a link between cell surface epidermal growth factor receptor and the MAPK/ERK signaling pathway. The chain is GRB2-associated and regulator of MAPK protein 2 (GAREM2) from Homo sapiens (Human).